The following is a 213-amino-acid chain: 3,4-dihydroxy-2-butanone 4-phosphate synthase (213 aa).

D-ribulose 5-phosphate contacts are provided by residues 37–38, Asp-42, 150–154, and Glu-174; these read RE and RPGHT. Glu-38 contacts Mg(2+). His-153 provides a ligand contact to Mg(2+).

The protein belongs to the DHBP synthase family. As to quaternary structure, homodimer. Mg(2+) is required as a cofactor. Requires Mn(2+) as cofactor.

It catalyses the reaction D-ribulose 5-phosphate = (2S)-2-hydroxy-3-oxobutyl phosphate + formate + H(+). It functions in the pathway cofactor biosynthesis; riboflavin biosynthesis; 2-hydroxy-3-oxobutyl phosphate from D-ribulose 5-phosphate: step 1/1. Functionally, catalyzes the conversion of D-ribulose 5-phosphate to formate and 3,4-dihydroxy-2-butanone 4-phosphate. The protein is 3,4-dihydroxy-2-butanone 4-phosphate synthase of Clostridium botulinum (strain ATCC 19397 / Type A).